The chain runs to 362 residues: 4-hydroxytryptamine kinase (362 aa).

Residues asparagine 37, lysine 57, and 118–120 (QDV) each bind ATP. The active site involves aspartate 224. 249 to 251 (DWE) is a binding site for ATP.

This sequence belongs to the methylthioribose kinase family. As to quaternary structure, monomer. Mg(2+) is required as a cofactor.

The enzyme catalyses 4-hydroxytryptamine + ATP = norbaeocystin + ADP + H(+). It carries out the reaction psilocin + ATP = psilocybin + ADP + H(+). The catalysed reaction is 4-hydroxy-N,N,N-trimethyltryptamine + ATP = aeruginascin + ADP + H(+). It participates in secondary metabolite biosynthesis. Functionally, 4-hydroxytryptamine kinase; part of the gene cluster that mediates the biosynthesis of psilocybin, a psychotropic tryptamine-derived natural product. The first step in the pathway is the decarboxylation of L-tryptophan to tryptamine by the decarboxylase psiD. 4-hydroxy-L-tryptophan is accepted as substrate by psiD as well. The cytochrome P450 monooxygenase psiH then converts tryptamine to 4-hydroxytryptamine. The kinase psiK catalyzes the 4-O-phosphorylation step by converting 4-hydroxytryptamine into norbaeocystin. The methyltransferase psiM then catalyzes iterative methyl transfer to the amino group of norbaeocystin to yield psilocybin via a monomethylated intermediate, baeocystin. 4-hydroxy-6-methyl-l-tryptophancan also be converted the decarboxylase PsiD, kinase PsiK, and methyltransferase PsiM into respectively 6-methyl-norbaeocystin, 6-methylbaeocystin, and 6-methylpsilocybin. PsiK kinase can also turn psilocin into psilocybin. This activity may represent a protective mechanism to rephosphorylate the unstable psilocin to the stable psilocybin in case of intracellular ester cleavage. Moreover, psiK is able to O-phosphorylate the quaternary amine 4-hydroxy-N,N,N-trimethyltryptamine (4-OH-TMT) to yield aeruginascin, another bioactive compound found in Psilocybe species. The sequence is that of 4-hydroxytryptamine kinase from Psilocybe cubensis (Psychedelic mushroom).